The sequence spans 358 residues: Bis(monoacylglycero)phosphate synthase CLN5 (358 aa).

Over 1-23 the chain is Cytoplasmic; that stretch reads MAQEVDTAQGAEMRRGAGAARGR. A helical; Signal-anchor for type II membrane protein transmembrane segment spans residues 24–40; that stretch reads ASWCWALALLWLAVVPG. Residues 41 to 358 are Lumenal-facing; the sequence is WSRVSGIPSR…PIRNKTLSGL (318 aa). Intrachain disulfides connect C70-C159 and C77-C165. The Proton acceptor role is filled by H117. N-linked (GlcNAc...) asparagine glycosylation is found at N130, N143, N178, and N203. Residue C231 is the Nucleophile; Acyl-thioester intermediate of the active site. N255, N271, and N281 each carry an N-linked (GlcNAc...) asparagine glycan. The segment at 304–343 is membrane-anchoring; the sequence is FLLSLLQIFDAVIVHKQFYLFYNFEYWFLPMKFPFIKITY. The N-linked (GlcNAc...) asparagine glycan is linked to N352.

This sequence belongs to the CLN5 family. Multimer. Interacts with SORT1, RAB5A and RAB7A. Interacts with PPT1, TPP1, CLN3, CLN6, CLN8, ATP5F1A and ATP5F1B. Post-translationally, N-glycosylated with both high mannose and complex type sugars. Glycosylation is important for proper folding and trafficking to the lysosomes. The type II membrane signal anchor is proteolytically cleaved to produce a mature form that is transported to the lysosomes (Bis(monoacylglycero)phosphate synthase CLN5, secreted form). In terms of processing, can undergo proteolytic cleavage at the C-terminus, probably by a cysteine protease and may involve the removal of approximately 10-15 residues from the C-terminal end. Ubiquitous.

The protein resides in the lysosome. It localises to the membrane. The enzyme catalyses S-hexadecanoyl-L-cysteinyl-[protein] + H2O = L-cysteinyl-[protein] + hexadecanoate + H(+). It catalyses the reaction 2 1-acyl-sn-glycero-3-phospho-(1'-sn-glycerol) = 1-acyl-sn-glycero-3-phospho-(3'-acyl-sn-1'-glycerol) + sn-glycero-3-phospho-(1'-sn-glycerol). The catalysed reaction is 2 1-(9Z-octadecenoyl)-sn-glycero-3-phospho-(1'-sn-glycerol) = 1-(9Z-octadecenoyl)-sn-glycero-3-phospho-(3'-(9Z-octadecenoyl)-1'-sn-glycerol) + sn-glycero-3-phospho-(1'-sn-glycerol). It carries out the reaction 2 1-octadecanoyl-sn-glycero-3-phospho-(1'-sn-glycerol) = 1-octadecanoyl-sn-glycero-3-phospho-(3'-octadecanoyl-1'-sn-glycerol) + sn-glycero-3-phospho-(1'-sn-glycerol). The enzyme catalyses 2 1-hexadecanoyl-sn-glycero-3-phospho-(1'-sn-glycerol) = 1-hexadecanoyl-sn-glycero-3-phospho-(3'-hexadecanoyl-1'-sn-glycerol) + sn-glycero-3-phospho-(1'-sn-glycerol). It catalyses the reaction 2 1-tetradecanoyl-sn-glycero-3-phospho-(1'-sn-glycerol) = 1-tetradecanoyl-sn-glycero-3-phospho-(3'-tetradecanoyl-1'-sn-glycerol) + sn-glycero-3-phospho-(1'-sn-glycerol). Anionic phospholipids activate bis(monoacylglycero)phosphate (BMP) synthase activity. Amiodarone, a cationic amphiphilic drug inhibits BMP synthase activity towards liposomal lysophosphatidylglycerol. Palmostatin B inhibits palmitoyl protein thioesterase activity. Functionally, catalyzes the synthesis of bis(monoacylglycero)phosphate (BMP) via transacylation of 2 molecules of lysophosphatidylglycerol (LPG). BMP also known as lysobisphosphatidic acid plays a key role in the formation of intraluminal vesicles and in maintaining intracellular cholesterol homeostasis. Can use only LPG as the exclusive lysophospholipid acyl donor for base exchange and displays BMP synthase activity towards various LPGs (LPG 14:0, LPG 16:0, LPG 18:0, LPG 18:1) with a higher preference for longer chain lengths. Plays a role in influencing the retrograde trafficking of lysosomal sorting receptors SORT1 and IGF2R from the endosomes to the trans-Golgi network by controlling the recruitment of retromer complex to the endosomal membrane. Regulates the localization and activation of RAB7A which is required to recruit the retromer complex to the endosomal membrane. In terms of biological role, exhibits palmitoyl protein thioesterase (S-depalmitoylation) activity in vitro and most likely plays a role in protein S-depalmitoylation. This is Bis(monoacylglycero)phosphate synthase CLN5 (CLN5) from Homo sapiens (Human).